The primary structure comprises 159 residues: 6,7-dimethyl-8-ribityllumazine synthase (159 aa).

Residues F23, A58–E60, and T82–I84 each bind 5-amino-6-(D-ribitylamino)uracil. The active-site Proton donor is the H90. Residue L115 coordinates 5-amino-6-(D-ribitylamino)uracil. R129 serves as a coordination point for (2S)-2-hydroxy-3-oxobutyl phosphate.

This sequence belongs to the DMRL synthase family. In terms of assembly, forms an icosahedral capsid composed of 60 subunits, arranged as a dodecamer of pentamers.

The enzyme catalyses (2S)-2-hydroxy-3-oxobutyl phosphate + 5-amino-6-(D-ribitylamino)uracil = 6,7-dimethyl-8-(1-D-ribityl)lumazine + phosphate + 2 H2O + H(+). It participates in cofactor biosynthesis; riboflavin biosynthesis; riboflavin from 2-hydroxy-3-oxobutyl phosphate and 5-amino-6-(D-ribitylamino)uracil: step 1/2. Functionally, catalyzes the formation of 6,7-dimethyl-8-ribityllumazine by condensation of 5-amino-6-(D-ribitylamino)uracil with 3,4-dihydroxy-2-butanone 4-phosphate. This is the penultimate step in the biosynthesis of riboflavin. The chain is 6,7-dimethyl-8-ribityllumazine synthase from Blochmanniella floridana.